The following is a 686-amino-acid chain: Leucine-rich repeat-containing protein 49 (686 aa).

LRR repeat units lie at residues 113-134 (HLRL…SNLQ), 135-156 (RLIF…STLK), 157-178 (SLRV…ENLK), 179-200 (NLDV…NHLC), 201-222 (DLRV…NGLD), 223-244 (SLTE…DNLP), and 245-266 (CLQR…SCLA). Positions 279 to 317 (NPIAQESWYKHTVLQNMMQLRQLDMKRITEEERRVASVV) constitute an LRRCT domain. Disordered stretches follow at residues 311-332 (RRVA…HKQS) and 359-381 (ASTQ…DGGN). Positions 319-341 (KKEEEKKRESHKQSLLKEKKRLT) form a coiled coil.

Part of the neuronal tubulin polyglutamylase complex which contains TPGS1, TPGS2, TTLL1, LRRC49 and NICN1. Interacts with PCM1; TTLL1, TPGS1, TPGS2 and LRRC49.

Its subcellular location is the cytoplasm. The protein localises to the cytoskeleton. The protein resides in the microtubule organizing center. It localises to the centrosome. It is found in the centriolar satellite. Its function is as follows. Subunit of the tubulin polyglutamylase complex (TPGC). The complex mediates cilia and flagella polyglutamylation which is essential for their biogenesis and motility. In Mus musculus (Mouse), this protein is Leucine-rich repeat-containing protein 49 (Lrrc49).